Here is a 418-residue protein sequence, read N- to C-terminus: Staphyloferrin B transporter (418 aa).

The next 10 helical transmembrane spans lie at 19 to 39, 49 to 69, 88 to 108, 163 to 183, 222 to 242, 257 to 277, 287 to 307, 317 to 337, 353 to 373, and 377 to 397; these read FIAIAGLTVLVPLLPIYMASL, LWSGIAIAAPAVTTMIASPIW, GLAVCLFLMALCTTPLQFVLV, ILGFSALLMSIAVITFIVCIF, FIIVGVLANFAMYGMLTALSP, VIGFLQSAFWTASILSAPLWG, SVYIFATIACGCSAILQGLAT, ILQGLTYSALIQSVMFVVVNA, MLVVGQIIGSLSGAAITSYTT, and TFIVMGVVFAVSSLFLICSTI.

The protein belongs to the major facilitator superfamily.

It localises to the cell membrane. Involved in staphyloferrin B secretion. The sequence is that of Staphyloferrin B transporter from Staphylococcus aureus (strain NCTC 8325 / PS 47).